Here is a 911-residue protein sequence, read N- to C-terminus: Isoleucine--tRNA ligase (911 aa).

Positions 57 to 67 (PYANGDIHMGH) match the 'HIGH' region motif. Glu551 contributes to the L-isoleucyl-5'-AMP binding site. A 'KMSKS' region motif is present at residues 592 to 596 (KMSKS). Lys595 lines the ATP pocket. Positions 881, 884, 901, and 904 each coordinate Zn(2+).

The protein belongs to the class-I aminoacyl-tRNA synthetase family. IleS type 1 subfamily. Monomer. The cofactor is Zn(2+).

It localises to the cytoplasm. It carries out the reaction tRNA(Ile) + L-isoleucine + ATP = L-isoleucyl-tRNA(Ile) + AMP + diphosphate. In terms of biological role, catalyzes the attachment of isoleucine to tRNA(Ile). As IleRS can inadvertently accommodate and process structurally similar amino acids such as valine, to avoid such errors it has two additional distinct tRNA(Ile)-dependent editing activities. One activity is designated as 'pretransfer' editing and involves the hydrolysis of activated Val-AMP. The other activity is designated 'posttransfer' editing and involves deacylation of mischarged Val-tRNA(Ile). This chain is Isoleucine--tRNA ligase, found in Exiguobacterium sibiricum (strain DSM 17290 / CCUG 55495 / CIP 109462 / JCM 13490 / 255-15).